A 435-amino-acid polypeptide reads, in one-letter code: S-locus-specific glycoprotein BS29-2 (435 aa).

Residues 1-30 (MKGVGKPYENSHTSFLLVFFVLTLFSPAFS) form the signal peptide. In terms of domain architecture, Bulb-type lectin spans 33–155 (TLSSIESLKI…NKNDRSGFLW (123 aa)). N-linked (GlcNAc...) asparagine glycosylation is found at Asn-113, Asn-120, Asn-244, Asn-260, and Asn-389. The 81-residue stretch at 350–430 (CSGDGFTRMK…NGQDLYVRLA (81 aa)) folds into the PAN domain. 2 disulfides stabilise this stretch: Cys-380–Cys-405 and Cys-388–Cys-390.

As to expression, stigma.

Its function is as follows. Involved in sporophytic self-incompatibility system (the inability of flowering plants to achieve self-fertilization). The polypeptide is S-locus-specific glycoprotein BS29-2 (SLSG) (Brassica oleracea var. alboglabra (Chinese kale)).